Reading from the N-terminus, the 208-residue chain is Dephospho-CoA kinase (208 aa).

Positions 11 to 207 constitute a DPCK domain; sequence VIGLTGGIAS…EYYLELAQHD (197 aa). ATP is bound at residue 19–24; sequence ASGKSA.

Belongs to the CoaE family.

It is found in the cytoplasm. It catalyses the reaction 3'-dephospho-CoA + ATP = ADP + CoA + H(+). It functions in the pathway cofactor biosynthesis; coenzyme A biosynthesis; CoA from (R)-pantothenate: step 5/5. Its function is as follows. Catalyzes the phosphorylation of the 3'-hydroxyl group of dephosphocoenzyme A to form coenzyme A. The sequence is that of Dephospho-CoA kinase from Hahella chejuensis (strain KCTC 2396).